Consider the following 133-residue polypeptide: MQFSTVASIAAVAAVASAAANVTTATVSQESTTLVTITSCEDHVCSETVSPALVSTATVTVDDVITQYTTWCPLTTEAPKNGTSTAAPVTSTEAPKNTTSAAPTHSVTSYTGAAAKALPAAGALLAGAAALLL.

The first 18 residues, 1–18 (MQFSTVASIAAVAAVASA), serve as a signal peptide directing secretion. N-linked (GlcNAc...) asparagine glycosylation is present at N21. T23, T24, and T26 each carry an O-linked (Man) threonine glycan. O-linked (Man) serine glycans are attached at residues S28 and S31. T32, T33, T36, and T38 each carry an O-linked (Man) threonine glycan. 2 O-linked (Man) serine glycosylation sites follow: S39 and S46. T48 is a glycosylation site (O-linked (Man) threonine). Repeat copies occupy residues 75-88 (TTEA…TAAP) and 91-103 (STEA…SAAP). The disordered stretch occupies residues 79–104 (PKNGTSTAAPVTSTEAPKNTTSAAPT). A Glycyl lysine isopeptide (Lys-Gly) (interchain with G-Cter in ubiquitin) cross-link involves residue K80. N-linked (GlcNAc...) asparagine glycans are attached at residues N81 and N97. Over residues 81–104 (NGTSTAAPVTSTEAPKNTTSAAPT) the composition is skewed to polar residues. G112 is lipidated: GPI-anchor amidated glycine. Positions 113-133 (AAAKALPAAGALLAGAAALLL) are cleaved as a propeptide — removed in mature form.

It to yeast protein YDR134C. In terms of processing, extensively O-glycosylated; glycans consist probably of single mannose residues. N-glycosylated. Post-translationally, the GPI-anchor is attached to the protein in the endoplasmic reticulum and serves to target the protein to the cell surface. There, the glucosamine-inositol phospholipid moiety is cleaved off and the GPI-modified mannoprotein is covalently attached via its lipidless GPI glycan remnant to the 1,6-beta-glucan of the outer cell wall layer.

It localises to the secreted. Its subcellular location is the cell wall. The protein localises to the membrane. Functionally, component of the cell wall. May play a role in the formation of a tightly packed outer mannan layer, which protects the inner glucan. The sequence is that of Covalently-linked cell wall protein 12 (CCW12) from Saccharomyces cerevisiae (strain ATCC 204508 / S288c) (Baker's yeast).